A 468-amino-acid chain; its full sequence is MPANSWPDNDSYKELDPLNSLLSEVSTTEESVVETRDLSLPSRFQGRRGKAALVLTIVWSGTIALHLVSWGSIFILGLTTVLGIHALGVVFARPRHYQKEMQGSLPFVSILVAAKNEEAVIAKLARNLCNLEYPNGQYEVWIIDDNSSDKTPHILAELAKEYDKLKVLRRSAQATGGKSGALNQVLPLTQGEIIAVFDADAQVASDMLLHVVPLFQREKVGAVQVRKAIANAKENFWTKGQMAEMSLDIWFQQQRTALGGIGELRGNGQFVRRQALDSCGGWNEETITDDLDLTFRLHLDKWDIECLFYPAVQEEGVTTAIALWHQRNRWAEGGYQRYLDYWDLILKNRMGTRKTWDMLMFMLTMYILPTAAIPDLLMAVVRHRPPMLGPVTGLSVTMSVVGMFAGLRRIRQEQKFQVHTPFVLLLQTMRGTLYMLHWLVVMSSTTARMSFRPKRLKWVKTVHTGSGE.

4 consecutive transmembrane segments (helical) span residues 51–71 (AALV…VSWG), 72–92 (SIFI…VVFA), 361–381 (FMLT…MAVV), and 387–407 (MLGP…FAGL).

It belongs to the glycosyltransferase 2 family. Mg(2+) is required as a cofactor.

It is found in the membrane. The catalysed reaction is a 1,2-diacyl-sn-glycerol + UDP-alpha-D-glucose = a 1,2-diacyl-3-O-(beta-D-glucopyranosyl)-sn-glycerol + UDP + H(+). Its function is as follows. Glucosyltransferase involved in the biosynthesis of the non-bilayer-forming membrane lipid beta-monoglucosyldiacylglycerol which contributes to regulate the properties and stability of the membrane. Catalyzes the transfer of a glucosyl residue from UDP-Glc to diacylglycerol (DAG) acceptor to form the corresponding beta-glucosyl-DAG (1,2-diacyl-3-O-(beta-D-glucopyranosyl)-sn-glycerol). It can only use UDP-Glc as sugar donor. The chain is Beta-monoglucosyldiacylglycerol synthase from Trichormus variabilis (strain ATCC 29413 / PCC 7937) (Anabaena variabilis).